The sequence spans 623 residues: Glutamine--fructose-6-phosphate aminotransferase [isomerizing] (623 aa).

Cys-2 serves as the catalytic Nucleophile; for GATase activity. In terms of domain architecture, Glutamine amidotransferase type-2 spans 2–228 (CGIVGYIGQA…NDQVVTITAD (227 aa)). SIS domains follow at residues 295–435 (IDES…LRGN) and 468–613 (LGRS…VDQP). The For Fru-6P isomerization activity role is filled by Lys-618.

Homodimer.

The protein resides in the cytoplasm. The enzyme catalyses D-fructose 6-phosphate + L-glutamine = D-glucosamine 6-phosphate + L-glutamate. Functionally, catalyzes the first step in hexosamine metabolism, converting fructose-6P into glucosamine-6P using glutamine as a nitrogen source. This chain is Glutamine--fructose-6-phosphate aminotransferase [isomerizing], found in Corynebacterium efficiens (strain DSM 44549 / YS-314 / AJ 12310 / JCM 11189 / NBRC 100395).